A 248-amino-acid chain; its full sequence is Meiotically up-regulated gene 110 protein (248 aa).

A helical transmembrane segment spans residues 23–43 (LRFVFWFSVLIPIFFIALIII).

It localises to the membrane. In terms of biological role, has a role in meiosis. The chain is Meiotically up-regulated gene 110 protein (mug110) from Schizosaccharomyces pombe (strain 972 / ATCC 24843) (Fission yeast).